The primary structure comprises 424 residues: MLQDIMNTKKIKLHDCHFGSPLCDPSPAPHLLSSAAAAGLSFHPGLVSSAAQHQQHGAGGWLHEEYYAPRSSPPSSLLAQTCVGSNATAFYAAENLPQFDFPALGTAAAAAAKAPFRSSESELYRPVDPLLLRADHSVRTYYVRPQKRDSGERTPLPPPSQQQHQDRIHGLFAGAPTTRLLSGEPKIHSFPPQVAAKPILPAMDAPSLQNQMENQLTRNCIGAATPVTPTGNLAGSGAPSKTRIRWTQDLHERFVDCVNQLGGADKATPKGILKLMNSDGLTIYHIKSHLQKYRIAKYMPASSEGKQLEKRATGNDMQNLDPKTGMQITEALRVQLDVQRRLHEQLEIQRNLQLRIEEQGKRLQKMFEDQLKASRSVMEPQELDDVVAFAAGDGDDDAFDDVDVQLLAVAGSGYDDAGFQSKIS.

The segment at 144–165 (RPQKRDSGERTPLPPPSQQQHQ) is disordered. Residues 238–298 (APSKTRIRWT…HLQKYRIAKY (61 aa)) enclose the HTH myb-type domain. The H-T-H motif DNA-binding region spans 269 to 294 (PKGILKLMNSDGLTIYHIKSHLQKYR). Positions 326 to 391 (MQITEALRVQ…ELDDVVAFAA (66 aa)) form a coiled coil. The LHEQLE motif lies at 342–347 (LHEQLE).

This sequence belongs to the MYB-CC family. In terms of assembly, interacts with SPX1 and SPX2 in the nucleus; these interactions prevent binding to the promoters of target genes, thus regulating negatively leaf inclination in response to phosphate (Pi) starvation. As to quaternary structure, homodimer. Interacts with PHR2 in the nucleus. In terms of tissue distribution, mostly expressed in roots and leaves blades and, to a lower extent, in leaves sheaths, culms and panicles. Localized in leaves lamina joints. Expressed equally in shoots and roots. As to expression, mostly expressed in shoots and, to a lower extent, in roots.

Its subcellular location is the nucleus. In terms of biological role, transcription factor binding to specific DNA sequences of target genes promoters, such as the motif R1BS 5'-NAKATNCN-3' and the motif P1BS 5'-GNATATNC-3' to trigger their expression. Nitrate-induced component involved in modulating phosphate (Pi) response and homeostasis together with PHR2; activates directly the expression of Pi starvation-induced (PSI) genes upon nitrate disponibility, thus triggering the nitrate-induced phosphate response (NIPR) promoting Pi uptake activity. Binds preferentially to the P1BS motif 5'-GNATATNC-3' in target genes promoters. Its function is as follows. Binds preferentially to the R1BS motif 5'-NAKATNCN-3' in target genes promoters, including several genes involved in the plant hormone signal transduction pathway. Involved in the shoot architecture; positively regulates leaf inclination by affecting lamina joint cell elongation via the direct promotion of ILI4/BU1 and BC1 genes expression, especially in response to phosphate (Pi) availability. Regulates both brassinolide (BL) biosynthesis and signaling by directly activating BL-biosynthesis and signaling genes. In Oryza sativa subsp. japonica (Rice), this protein is Myb family transcription factor RLI1.